The following is a 738-amino-acid chain: Flowering time control protein FCA (738 aa).

Positions 1 to 118 (MHRGGDRSTD…RGDHSDHDNR (118 aa)) are disordered. Composition is skewed to gly residues over residues 52–70 (RGGGGGGGDGGGGGGGGGR) and 81–98 (SGGGGYRSGGGGEYGEPG). The span at 109-118 (RGDHSDHDNR) shows a compositional bias: basic and acidic residues. 2 RRM domains span residues 122-203 (VKLF…YADG) and 213-293 (HKLF…FADP). 2 disordered regions span residues 292–451 (DPKR…PAQQ) and 566–595 (QQSNLNHQQPTQGQPVQSSNPGAPNAIIPS). Residues 301–311 (SRGGPAFGGPG) are compositionally biased toward gly residues. Residues 342–358 (HPSSPRSAPHQFNNFGS) are compositionally biased toward polar residues. Low complexity predominate over residues 368–377 (TVTSTTDTAT). Polar residues predominate over residues 383–401 (FSGNGSLSSQTAVPSSSHM). Low complexity predominate over residues 435–451 (QLQNNQQGQPLQGPAQQ). Polar residues predominate over residues 575-595 (PTQGQPVQSSNPGAPNAIIPS). In terms of domain architecture, WW spans 609 to 642 (VPLTCNWTEHTSPEGFKYYYNSITRESKWDKPEE). The tract at residues 670–738 (MQQLQSPPQA…QSAQERAWKS (69 aa)) is disordered. Residues 683 to 706 (PAMQPVQQIPQAQQGQQQMQMKQQ) show a composition bias toward low complexity. The segment covering 723–732 (RIQQGIQSAQ) has biased composition (polar residues).

As to quaternary structure, interacts with FY. Binds to SF1, FIK, RPRD1B, OsI_31983 and MADS8.

The protein resides in the nucleus. In terms of biological role, plays a major role in the promotion of the transition of the vegetative meristem to reproductive development. Required for RNA-mediated chromatin silencing of a range of loci in the genome. Cotranscriptionally recognizes aberrant RNA and marks it for silencing. Controls alternative cleavage and polyadenylation on pre-mRNAs and antisense RNAs. Regulates flowering time, seed size and cell volume, probably via the modulation of cell size. In Oryza sativa subsp. indica (Rice), this protein is Flowering time control protein FCA.